Here is a 125-residue protein sequence, read N- to C-terminus: Calcitonin receptor-stimulating peptide 1 (125 aa).

The signal sequence occupies residues methionine 1 to alanine 25. The propeptide occupies alanine 26–glutamine 77. Cysteine 81 and cysteine 86 form a disulfide bridge.

Belongs to the calcitonin family.

It is found in the secreted. In terms of biological role, stimulates cAMP production in porcine kidney cell line LLC-PK1 via the calcitonin receptor (CT) but not via the CT-like (CL) receptor. The sequence is that of Calcitonin receptor-stimulating peptide 1 (CRSP1) from Capra hircus (Goat).